We begin with the raw amino-acid sequence, 54 residues long: uncharacterized protein (54 aa).

A disordered region spans residues 13–54; the sequence is VAGDSGGNPENISIGTTSGAVVNKGPEQIPKKKKEESKEKEE. The segment covering 20 to 32 has biased composition (polar residues); that stretch reads NPENISIGTTSGA. The span at 41–54 shows a compositional bias: basic and acidic residues; it reads IPKKKKEESKEKEE.

This is an uncharacterized protein from Enterobacteria phage T4 (Bacteriophage T4).